A 320-amino-acid polypeptide reads, in one-letter code: Protein U25 (320 aa).

Belongs to the herpesviridae US22 family.

This Human herpesvirus 7 (strain JI) (HHV-7) protein is Protein U25 (U25).